The primary structure comprises 493 residues: Transcript termination protein A18 (493 aa).

Residues 100-256 (MIELKRPLYI…NSIINIAKLS (157 aa)) enclose the Helicase ATP-binding domain. ATP is bound at residue 113 to 120 (LACGFGKT). The short motif at 206 to 209 (DESH) is the DESH box element.

The protein belongs to the helicase family. Poxviruses subfamily. In terms of assembly, interacts with G2. Might be part of a transcription complex composed at least of G2, A18, and H5.

Its subcellular location is the virion. Functionally, DNA helicase which seems to act as a postreplicative transcription termination factor. Involved in ATP-dependent release of nascent RNA. Forms a stable complex with single-stranded DNA, and to a lesser extent RNA. In Cowpox virus (strain GRI-90 / Grishak) (CPV), this protein is Transcript termination protein A18.